The following is a 601-amino-acid chain: Probable HECT-type ubiquitin ligase-interacting protein creD (601 aa).

Disordered stretches follow at residues glutamate 374–serine 397 and valine 454–threonine 496. Residues serine 455–proline 473 show a composition bias toward low complexity. Basic and acidic residues predominate over residues leucine 475–tyrosine 489.

Belongs to the arrestin family. Interacts with hulA.

Functionally, component of the regulatory network controlling carbon source utilization through ubiquitination and deubiquitination involving creA, creB, creC, creD and acrB. May be involved in signaling by recognizing appropriately phosphorylated substrates via its arrestin domains and then recruit a HECT-type ubiquitin ligase such as hulA, leading to ubiquitination of the substrate, providing a link between ubiquitination and phosphorylation in protein regulation and stability. The sequence is that of Probable HECT-type ubiquitin ligase-interacting protein creD (creD) from Aspergillus fumigatus (strain CBS 144.89 / FGSC A1163 / CEA10) (Neosartorya fumigata).